Reading from the N-terminus, the 198-residue chain is Ribonuclease HII (198 aa).

In terms of domain architecture, RNase H type-2 spans 2–192 (MYYCGIDEAG…IKKIIDNQKN (191 aa)). A divalent metal cation contacts are provided by aspartate 8, glutamate 9, and aspartate 101.

The protein belongs to the RNase HII family. Requires Mn(2+) as cofactor. Mg(2+) is required as a cofactor.

The protein resides in the cytoplasm. The catalysed reaction is Endonucleolytic cleavage to 5'-phosphomonoester.. In terms of biological role, endonuclease that specifically degrades the RNA of RNA-DNA hybrids. In Natranaerobius thermophilus (strain ATCC BAA-1301 / DSM 18059 / JW/NM-WN-LF), this protein is Ribonuclease HII.